We begin with the raw amino-acid sequence, 684 residues long: 1,4-alpha-glucan-branching enzyme (684 aa).

(1,4-alpha-D-glucosyl)n-binding residues include W88 and K123. Catalysis depends on D340, which acts as the Nucleophile. The Proton donor role is filled by E395.

The protein belongs to the glycosyl hydrolase 13 family. GlgB subfamily.

The protein resides in the cytoplasm. It catalyses the reaction Transfers a segment of a (1-&gt;4)-alpha-D-glucan chain to a primary hydroxy group in a similar glucan chain.. Its pathway is glycan biosynthesis; glycogen biosynthesis. In terms of biological role, glycogen-branching enzyme participates in the glycogen biosynthetic process along with glycogenin and glycogen synthase. Generates alpha-1,6-glucosidic branches from alpha-1,4-linked glucose chains, to increase solubility of the glycogen polymer. The sequence is that of 1,4-alpha-glucan-branching enzyme (be1) from Emericella nidulans (strain FGSC A4 / ATCC 38163 / CBS 112.46 / NRRL 194 / M139) (Aspergillus nidulans).